A 689-amino-acid chain; its full sequence is Polyribonucleotide nucleotidyltransferase (689 aa).

Residues D482 and D488 each coordinate Mg(2+). One can recognise a KH domain in the interval P549–V608. The S1 motif domain occupies G618–K686.

The protein belongs to the polyribonucleotide nucleotidyltransferase family. The cofactor is Mg(2+).

The protein localises to the cytoplasm. It catalyses the reaction RNA(n+1) + phosphate = RNA(n) + a ribonucleoside 5'-diphosphate. Its function is as follows. Involved in mRNA degradation. Catalyzes the phosphorolysis of single-stranded polyribonucleotides processively in the 3'- to 5'-direction. This is Polyribonucleotide nucleotidyltransferase from Endomicrobium trichonymphae.